A 152-amino-acid chain; its full sequence is Protein-export protein SecB (152 aa).

This sequence belongs to the SecB family. Homotetramer, a dimer of dimers. One homotetramer interacts with 1 SecA dimer.

It is found in the cytoplasm. One of the proteins required for the normal export of preproteins out of the cell cytoplasm. It is a molecular chaperone that binds to a subset of precursor proteins, maintaining them in a translocation-competent state. It also specifically binds to its receptor SecA. In Thiobacillus denitrificans (strain ATCC 25259 / T1), this protein is Protein-export protein SecB.